We begin with the raw amino-acid sequence, 270 residues long: NFAT activation molecule 1 (270 aa).

The first 42 residues, 1–42 (MENQPVRWRALPGLPRPPGLPAAPWLLLGVLLLPGTLRLAGG), serve as a signal peptide directing secretion. Residues 43 to 163 (QSVTHTGLPI…YREPPQSPQK (121 aa)) lie on the Extracellular side of the membrane. Residues 50–150 (LPIMASLANT…RGSGTFILVR (101 aa)) form the Ig-like V-type domain. A disulfide bridge links cysteine 65 with cysteine 114. Asparagine 107 carries N-linked (GlcNAc...) asparagine glycosylation. The helical transmembrane segment at 164–184 (LLLFGFTGLLSVLSVVGTALL) threads the bilayer. Residues 185–270 (LWNKKRMRGP…GELNLVYENL (86 aa)) are Cytoplasmic-facing. The interval 190–219 (RMRGPGKDPTRKCPDPRSASSPKQHPSESV) is disordered. The span at 194–204 (PGKDPTRKCPD) shows a compositional bias: basic and acidic residues. Positions 207–219 (SASSPKQHPSESV) are enriched in polar residues. The 29-residue stretch at 209 to 237 (SSPKQHPSESVYTALQRRETEVYACIENE) folds into the ITAM domain. Residues tyrosine 220 and tyrosine 231 each carry the phosphotyrosine modification. The interval 234-262 (IENEDGSSPTAKQSPLSQERPHRFEDDGE) is disordered. Over residues 239 to 250 (GSSPTAKQSPLS) the composition is skewed to polar residues.

In terms of assembly, no direct interaction with the B-cell antigen receptor (BCR). Interacts with SYK; probably involved in BCR signaling. Interacts with ZAP70. Post-translationally, N-glycosylated. Highly expressed in neutrophils, primary monocytes, mast cells, monocytic cell lines and lymphocytes. Also expressed in spleen B and T-cells, and lung. Expressed at low level in non-immune tissue.

Its subcellular location is the cell membrane. May function in immune system as a receptor which activates via the calcineurin/NFAT-signaling pathway the downstream cytokine gene promoters. Activates the transcription of IL-13 and TNF-alpha promoters. May be involved in the regulation of B-cell, but not T-cell, development. Overexpression activates downstream effectors without ligand binding or antibody cross-linking. This Homo sapiens (Human) protein is NFAT activation molecule 1 (NFAM1).